Reading from the N-terminus, the 1342-residue chain is MRANDALQVLGLLFSLARGSEVGNSQAVCPGTLNGLSVTGDAENQYQTLYKLYERCEVVMGNLEIVLTGHNADLSFLQWIREVTGYVLVAMNEFSTLPLPNLRVVRGTQVYDGKFAIFVMLNYNTNSSHALRQLRLTQLTEILSGGVYIEKNDKLCHMDTIDWRDIVRDRDAEIVVKDNGRSCPPCHEVCKGRCWGPGSEDCQTLTKTICAPQCNGHCFGPNPNQCCHDECAGGCSGPQDTDCFACRHFNDSGACVPRCPQPLVYNKLTFQLEPNPHTKYQYGGVCVASCPHNFVVDQTSCVRACPPDKMEVDKNGLKMCEPCGGLCPKACEGTGSGSRFQTVDSSNIDGFVNCTKILGNLDFLITGLNGDPWHKIPALDPEKLNVFRTVREITGYLNIQSWPPHMHNFSVFSNLTTIGGRSLYNRGFSLLIMKNLNVTSLGFRSLKEISAGRIYISANRQLCYHHSLNWTKVLRGPTEERLDIKHNRPRRDCVAEGKVCDPLCSSGGCWGPGPGQCLSCRNYSRGGVCVTHCNFLNGEPREFAHEAECFSCHPECQPMEGTATCNGSGSDTCAQCAHFRDGPHCVSSCPHGVLGAKGPIYKYPDVQNECRPCHENCTQGCKGPELQDCLGQTLVLIGKTHLTMALTVIAGLVVIFMMLGGTFLYWRGRRIQNKRAMRRYLERGESIEPLDPSEKANKVLARIFKETELRKLKVLGSGVFGTVHKGVWIPEGESIKIPVCIKVIEDKSGRQSFQAVTDHMLAIGSLDHAHIVRLLGLCPGSSLQLVTQYLPLGSLLDHVRQHRGALGPQLLLNWGVQIAKGMYYLEEHGMVHRNLAARNVLLKSPSQVQVADFGVADLLPPDDKQLLYSEAKTPIKWMALESIHFGKYTHQSDVWSYGVTVWELMTFGAEPYAGLRLAEVPDLLEKGERLAQPQICTIDVYMVMVKCWMIDENIRPTFKELANEFTRMARDPPRYLVIKRESGPGIAPGPEPHGLTNKKLEEVELEPELDLDLDLEAEEDNLATTTLGSALSLPVGTLNRPRGSQSLLSPSSGYMPMNQGNLGESCQESAVSGSSERCPRPVSLHPMPRGCLASESSEGHVTGSEAELQEKVSMCRSRSRSRSPRPRGDSAYHSQRHSLLTPVTPLSPPGLEEEDVNGYVMPDTHLKGTPSSREGTLSSVGLSSVLGTEEEDEDEEYEYMNRRRRHSPPHPPRPSSLEELGYEYMDVGSDLSASLGSTQSCPLHPVPIMPTAGTTPDEDYEYMNRQRDGGGPGGDYAAMGACPASEQGYEEMRAFQGPGHQAPHVHYARLKTLRSLEATDSAFDNPDYWHSRLFPKANAQRT.

The signal sequence occupies residues 1–19; that stretch reads MRANDALQVLGLLFSLARG. At 20–643 the chain is on the extracellular side; sequence SEVGNSQAVC…LVLIGKTHLT (624 aa). Cysteines 29 and 56 form a disulfide. The N-linked (GlcNAc...) asparagine glycan is linked to N126. Intrachain disulfides connect C156–C183, C186–C194, C190–C202, C210–C218, C214–C226, C227–C235, C231–C243, C246–C255, C259–C286, C290–C301, C305–C320, and C323–C327. A glycan (N-linked (GlcNAc...) asparagine) is linked at N250. Residues N353, N408, N414, N437, and N469 are each glycosylated (N-linked (GlcNAc...) asparagine). Intrachain disulfides connect C500–C509, C504–C517, C520–C529, C533–C549, C552–C565, C556–C573, C576–C585, C589–C610, C613–C621, and C617–C629. N-linked (GlcNAc...) asparagine glycosylation occurs at N522. An N-linked (GlcNAc...) asparagine glycan is attached at N566. N-linked (GlcNAc...) asparagine glycosylation is present at N616. A helical membrane pass occupies residues 644-664; the sequence is MALTVIAGLVVIFMMLGGTFL. At 665–1342 the chain is on the cytoplasmic side; the sequence is YWRGRRIQNK…LFPKANAQRT (678 aa). S686 is subject to Phosphoserine. Residues 709-966 enclose the Protein kinase domain; the sequence is LRKLKVLGSG…TFKELANEFT (258 aa). Residues 715–723, K742, 788–790, and 834–839 contribute to the ATP site; these read LGSGVFGTV, QYL, and NLAARN. N834 functions as the Proton acceptor in the catalytic mechanism. Disordered regions lie at residues 980-999 and 1033-1152; these read RESGPGIAPGPEPHGLTNKK and LPVG…PGLE. A Phosphoserine modification is found at S982. Polar residues predominate over residues 1042–1075; sequence RGSQSLLSPSSGYMPMNQGNLGESCQESAVSGSS.

This sequence belongs to the protein kinase superfamily. Tyr protein kinase family. EGF receptor subfamily. As to quaternary structure, monomer and homodimer. Heterodimer with each of the other ERBB receptors (Potential). Interacts with CSPG5. Interacts with GRB7. Interacts with MUC1. Interacts with MYOC. Interacts with isoform 2 of PA2G4. Found in a ternary complex with NRG1 and ITGAV:ITGB3 or ITGA6:ITGB4. In terms of processing, autophosphorylated. Ligand-binding increases phosphorylation on tyrosine residues and promotes its association with the p85 subunit of phosphatidylinositol 3-kinase. In terms of tissue distribution, epithelial tissues and brain.

The protein localises to the cell membrane. It localises to the secreted. The enzyme catalyses L-tyrosyl-[protein] + ATP = O-phospho-L-tyrosyl-[protein] + ADP + H(+). Tyrosine-protein kinase that plays an essential role as cell surface receptor for neuregulins. Binds to neuregulin-1 (NRG1) and is activated by it; ligand-binding increases phosphorylation on tyrosine residues and promotes its association with the p85 subunit of phosphatidylinositol 3-kinase. May also be activated by CSPG5. Involved in the regulation of myeloid cell differentiation. The chain is Receptor tyrosine-protein kinase erbB-3 (ERBB3) from Homo sapiens (Human).